Here is a 112-residue protein sequence, read N- to C-terminus: Probable 4-amino-4-deoxy-L-arabinose-phosphoundecaprenol flippase subunit ArnE (112 aa).

The EamA domain maps to 35–110 (RHILFWLGMA…IVVGIVILGT (76 aa)). A run of 3 helical transmembrane segments spans residues 37–57 (ILFW…LWLS), 66–86 (IAYP…WGIW), and 89–109 (PVAR…VILG).

The protein belongs to the ArnE family. As to quaternary structure, heterodimer of ArnE and ArnF.

The protein localises to the cell inner membrane. The protein operates within bacterial outer membrane biogenesis; lipopolysaccharide biosynthesis. In terms of biological role, translocates 4-amino-4-deoxy-L-arabinose-phosphoundecaprenol (alpha-L-Ara4N-phosphoundecaprenol) from the cytoplasmic to the periplasmic side of the inner membrane. The sequence is that of Probable 4-amino-4-deoxy-L-arabinose-phosphoundecaprenol flippase subunit ArnE from Klebsiella pneumoniae (strain 342).